We begin with the raw amino-acid sequence, 125 residues long: Unclassified hydrophobin 8 (125 aa).

The N-terminal stretch at 1–20 (MMFSKPVVLATTALATFAAA) is a signal peptide. 4 cysteine pairs are disulfide-bonded: C31-C105, C38-C99, C39-C90, and C106-C119.

It belongs to the fungal hydrophobin family. As to quaternary structure, self-assembles to form functional amyloid fibrils called rodlets. Self-assembly into fibrillar rodlets occurs spontaneously at hydrophobic:hydrophilic interfaces and the rodlets further associate laterally to form amphipathic monolayers.

It localises to the secreted. Its subcellular location is the cell wall. Its function is as follows. Aerial growth, conidiation, and dispersal of filamentous fungi in the environment rely upon a capability of their secreting small amphipathic proteins called hydrophobins (HPBs) with low sequence identity. Class I can self-assemble into an outermost layer of rodlet bundles on aerial cell surfaces, conferring cellular hydrophobicity that supports fungal growth, development and dispersal; whereas Class II form highly ordered films at water-air interfaces through intermolecular interactions but contribute nothing to the rodlet structure. Hydph8 is an unclassified hydrophobin involved in mycelial growth. The chain is Unclassified hydrophobin 8 from Pleurotus ostreatus (strain PC15) (Oyster mushroom).